The following is a 357-amino-acid chain: Phospho-N-acetylmuramoyl-pentapeptide-transferase (357 aa).

10 consecutive transmembrane segments (helical) span residues 23 to 43, 70 to 90, 91 to 111, 127 to 147, 171 to 191, 196 to 216, 236 to 256, 260 to 280, 286 to 306, and 334 to 354; these read AIFS…YFIY, TMGG…YCNL, SNIY…IGFI, LKWK…MIKI, YLYV…VNLT, GLAI…SLFS, LAIL…FNSY, VFMG…IAIL, LLII…LQII, and LIIV…LISL.

The protein belongs to the glycosyltransferase 4 family. MraY subfamily. It depends on Mg(2+) as a cofactor.

The protein resides in the cell inner membrane. It carries out the reaction UDP-N-acetyl-alpha-D-muramoyl-L-alanyl-gamma-D-glutamyl-meso-2,6-diaminopimeloyl-D-alanyl-D-alanine + di-trans,octa-cis-undecaprenyl phosphate = di-trans,octa-cis-undecaprenyl diphospho-N-acetyl-alpha-D-muramoyl-L-alanyl-D-glutamyl-meso-2,6-diaminopimeloyl-D-alanyl-D-alanine + UMP. It participates in cell wall biogenesis; peptidoglycan biosynthesis. Functionally, catalyzes the initial step of the lipid cycle reactions in the biosynthesis of the cell wall peptidoglycan: transfers peptidoglycan precursor phospho-MurNAc-pentapeptide from UDP-MurNAc-pentapeptide onto the lipid carrier undecaprenyl phosphate, yielding undecaprenyl-pyrophosphoryl-MurNAc-pentapeptide, known as lipid I. This chain is Phospho-N-acetylmuramoyl-pentapeptide-transferase, found in Buchnera aphidicola subsp. Acyrthosiphon pisum (strain Tuc7).